A 332-amino-acid polypeptide reads, in one-letter code: Adenosine deaminase (332 aa).

Zn(2+) is bound by residues His-12 and His-14. Substrate is bound by residues His-14, Asp-16, and Gly-170. Residue His-197 coordinates Zn(2+). Glu-200 serves as the catalytic Proton donor. Residue Asp-278 participates in Zn(2+) binding. Asp-279 contacts substrate.

It belongs to the metallo-dependent hydrolases superfamily. Adenosine and AMP deaminases family. Adenosine deaminase subfamily. Zn(2+) serves as cofactor.

The enzyme catalyses adenosine + H2O + H(+) = inosine + NH4(+). It catalyses the reaction 2'-deoxyadenosine + H2O + H(+) = 2'-deoxyinosine + NH4(+). In terms of biological role, catalyzes the hydrolytic deamination of adenosine and 2-deoxyadenosine. The polypeptide is Adenosine deaminase (Yersinia enterocolitica serotype O:8 / biotype 1B (strain NCTC 13174 / 8081)).